A 259-amino-acid chain; its full sequence is Tegument protein UL51 homolog (259 aa).

A lipid anchor (S-palmitoyl cysteine; by host) is attached at Cys9.

The protein belongs to the herpesviridae UL51 family. In terms of assembly, oligomerizes. Interacts with ORF53; this interaction mediates ORF53 incorporation to virions. In terms of processing, phosphorylated. Palmitoylation is necessary for Golgi localization.

Its subcellular location is the virion tegument. It localises to the host cytoplasm. The protein resides in the host Golgi apparatus. Its function is as follows. Plays several roles during the time course of infection, including egress of virus particles from the perinuclear space and secondary envelopment of cytoplasmic capsids that bud into specific trans-Golgi network (TGN)-derived membranes. The polypeptide is Tegument protein UL51 homolog (Varicella-zoster virus (strain Dumas) (HHV-3)).